A 95-amino-acid polypeptide reads, in one-letter code: Selenoprotein K (95 aa).

Residues 20-42 (LSFLTDMFWGITDFVVMFFQSII) form a helical membrane-spanning segment. The interval 47–95 (TRRGCQNSSSSTRYDDGRGPPGHPRRMGRINHGSGPSAPPMAGGGGUGR) is disordered. A non-standard amino acid (selenocysteine) is located at residue Sec-93.

It belongs to the selenoprotein K family.

It localises to the endoplasmic reticulum membrane. It is found in the cell membrane. Required for Ca(2+) flux in immune cells and plays a role in T-cell proliferation and in T-cell and neutrophil migration. Involved in endoplasmic reticulum-associated degradation (ERAD) of soluble glycosylated proteins. Required for cell surface expression of CD36 and involved in macrophage uptake of low-density lipoprotein and in foam cell formation. Required for palmitoylation. The polypeptide is Selenoprotein K (selenok) (Xenopus laevis (African clawed frog)).